A 107-amino-acid polypeptide reads, in one-letter code: Phycocyanobilin lyase subunit beta (107 aa).

The protein belongs to the CpcE/RpcE/PecE family. CpcE and CpcF associate to form a lyase.

Functionally, required for the chromophorylation of the CpcA gene product. The sequence is that of Phycocyanobilin lyase subunit beta (cpcF) from Mastigocladus laminosus (Fischerella sp.).